The chain runs to 1185 residues: 1-phosphatidylinositol 4,5-bisphosphate phosphodiesterase beta-2 (1185 aa).

The 152-residue stretch at 312 to 463 (HDMTQPLNHY…LRGKILIKNK (152 aa)) folds into the PI-PLC X-box domain. The active site involves His-327. Positions 328, 357, and 359 each coordinate Ca(2+). Residue His-374 is part of the active site. Glu-408 contributes to the Ca(2+) binding site. The tract at residues 460 to 533 (IKNKKNQFSG…EEIKKMQSDE (74 aa)) is disordered. Positions 465 to 476 (NQFSGPTSSSKD) are enriched in polar residues. Over residues 501-524 (EGTELEEEEVEEEEEEESGNLDEE) the composition is skewed to acidic residues. The PI-PLC Y-box domain occupies 546–662 (MSSLVNYIQP…GYLLKHEFMR (117 aa)). A C2 domain is found at 662–790 (RRPDKQFNPF…CLHSESNMPL (129 aa)). Disordered stretches follow at residues 859–888 (LAPT…RTAS) and 943–979 (GACK…VDGR). Positions 872–888 (GAREEAMKEAAEPRTAS) are enriched in basic and acidic residues. A Phosphoserine modification is found at Ser-953. Positions 988–1147 (ELELLRQGEE…VKESVRACLR (160 aa)) form a coiled coil.

In terms of assembly, interacts with RAC1. Forms a complex composed of at least WDR26, a G-beta:gamma unit, and PLCB2. Requires Ca(2+) as cofactor.

It catalyses the reaction a 1,2-diacyl-sn-glycero-3-phospho-(1D-myo-inositol-4,5-bisphosphate) + H2O = 1D-myo-inositol 1,4,5-trisphosphate + a 1,2-diacyl-sn-glycerol + H(+). The enzyme catalyses a 1,2-diacyl-sn-glycero-3-phospho-(1D-myo-inositol) + H2O = 1D-myo-inositol 1-phosphate + a 1,2-diacyl-sn-glycerol + H(+). The production of the second messenger molecules diacylglycerol (DAG) and inositol 1,4,5-trisphosphate (IP3) is mediated by activated phosphatidylinositol-specific phospholipase C enzymes. In neutrophils, participates in a phospholipase C-activating N-formyl peptide-activated GPCR (G protein-coupled receptor) signaling pathway by promoting RASGRP4 activation by DAG, to promote neutrophil functional responses. In Homo sapiens (Human), this protein is 1-phosphatidylinositol 4,5-bisphosphate phosphodiesterase beta-2.